The chain runs to 363 residues: tRNA N6-adenosine threonylcarbamoyltransferase (363 aa).

2 residues coordinate Fe cation: histidine 117 and histidine 121. Substrate-binding positions include 139 to 143, aspartate 172, glycine 185, and asparagine 287; that span reads LVSGG. Aspartate 315 contacts Fe cation.

Belongs to the KAE1 / TsaD family. Fe(2+) serves as cofactor.

It is found in the cytoplasm. The enzyme catalyses L-threonylcarbamoyladenylate + adenosine(37) in tRNA = N(6)-L-threonylcarbamoyladenosine(37) in tRNA + AMP + H(+). Functionally, required for the formation of a threonylcarbamoyl group on adenosine at position 37 (t(6)A37) in tRNAs that read codons beginning with adenine. Is involved in the transfer of the threonylcarbamoyl moiety of threonylcarbamoyl-AMP (TC-AMP) to the N6 group of A37, together with TsaE and TsaB. TsaD likely plays a direct catalytic role in this reaction. The protein is tRNA N6-adenosine threonylcarbamoyltransferase of Cereibacter sphaeroides (strain ATCC 17025 / ATH 2.4.3) (Rhodobacter sphaeroides).